Reading from the N-terminus, the 590-residue chain is Phenylalanine--tRNA ligase beta subunit (590 aa).

One can recognise a B5 domain in the interval 276–382 (MELDVWDVPV…IMYNYDRFEP (107 aa)). The Mg(2+) site is built by Asn-360, Asp-366, Glu-369, and Asp-370.

This sequence belongs to the phenylalanyl-tRNA synthetase beta subunit family. Type 2 subfamily. As to quaternary structure, tetramer of two alpha and two beta subunits. Mg(2+) serves as cofactor.

Its subcellular location is the cytoplasm. It carries out the reaction tRNA(Phe) + L-phenylalanine + ATP = L-phenylalanyl-tRNA(Phe) + AMP + diphosphate + H(+). In Methanopyrus kandleri (strain AV19 / DSM 6324 / JCM 9639 / NBRC 100938), this protein is Phenylalanine--tRNA ligase beta subunit.